The sequence spans 82 residues: Delta-conotoxin-like SmVIA (82 aa).

The signal sequence occupies residues methionine 1–alanine 22. Residues aspartate 23 to asparagine 49 constitute a propeptide that is removed on maturation. 3 disulfide bridges follow: cysteine 54–cysteine 69, cysteine 61–cysteine 73, and cysteine 68–cysteine 77. A 4-hydroxyproline modification is found at proline 65.

Belongs to the conotoxin O1 superfamily. Expressed by the venom duct.

The protein resides in the secreted. Delta-conotoxins bind to site 6 of voltage-gated sodium channels (Nav) and inhibit the inactivation process. The sequence is that of Delta-conotoxin-like SmVIA from Conus stercusmuscarum (Fly-specked cone).